The chain runs to 123 residues: Large ribosomal subunit protein bL19 (123 aa).

Belongs to the bacterial ribosomal protein bL19 family.

This protein is located at the 30S-50S ribosomal subunit interface and may play a role in the structure and function of the aminoacyl-tRNA binding site. This Acinetobacter baylyi (strain ATCC 33305 / BD413 / ADP1) protein is Large ribosomal subunit protein bL19.